Consider the following 457-residue polypeptide: Adenylosuccinate synthetase isozyme 2 A (457 aa).

GTP-binding positions include 40-46 and 68-70; these read GDEGKGK and GHT. D41 serves as the catalytic Proton acceptor. Mg(2+) is bound by residues D41 and G68. D41 is a binding site for substrate. IMP contacts are provided by residues 41–44, 66–69, T163, R177, N256, T271, and R335; these read DEGK and NAGH. H69 serves as the catalytic Proton donor. Substrate is bound at residue 331 to 337; the sequence is VTTGRKR. GTP is bound by residues R337, 363–365, and 445–448; these read KLD and GVGK.

It belongs to the adenylosuccinate synthetase family. Homodimer. Mg(2+) serves as cofactor.

It localises to the cytoplasm. The protein localises to the mitochondrion. The enzyme catalyses IMP + L-aspartate + GTP = N(6)-(1,2-dicarboxyethyl)-AMP + GDP + phosphate + 2 H(+). The protein operates within purine metabolism; AMP biosynthesis via de novo pathway; AMP from IMP: step 1/2. Its activity is regulated as follows. Inhibited competitively by AMP and IMP and non-competitively by fructose 1,6-bisphosphate. Its function is as follows. Plays an important role in the de novo pathway and in the salvage pathway of purine nucleotide biosynthesis. Catalyzes the first committed step in the biosynthesis of AMP from IMP. The sequence is that of Adenylosuccinate synthetase isozyme 2 A (adss2-a) from Xenopus tropicalis (Western clawed frog).